The chain runs to 336 residues: Anthranilate phosphoribosyltransferase (336 aa).

5-phospho-alpha-D-ribose 1-diphosphate contacts are provided by residues Gly79, 82-83 (GD), Thr87, 89-92 (NIST), 107-115 (KHGNRCVSS), and Ala119. Gly79 is a binding site for anthranilate. Position 91 (Ser91) interacts with Mg(2+). Position 110 (Asn110) interacts with anthranilate. Arg165 is a binding site for anthranilate. Positions 224 and 225 each coordinate Mg(2+).

Belongs to the anthranilate phosphoribosyltransferase family. Homodimer. The cofactor is Mg(2+).

The catalysed reaction is N-(5-phospho-beta-D-ribosyl)anthranilate + diphosphate = 5-phospho-alpha-D-ribose 1-diphosphate + anthranilate. It functions in the pathway amino-acid biosynthesis; L-tryptophan biosynthesis; L-tryptophan from chorismate: step 2/5. Catalyzes the transfer of the phosphoribosyl group of 5-phosphorylribose-1-pyrophosphate (PRPP) to anthranilate to yield N-(5'-phosphoribosyl)-anthranilate (PRA). This chain is Anthranilate phosphoribosyltransferase, found in Lachnoclostridium phytofermentans (strain ATCC 700394 / DSM 18823 / ISDg) (Clostridium phytofermentans).